The sequence spans 301 residues: Bifunctional protein FolD (301 aa).

NADP(+)-binding positions include 164–166, Ser191, and Ile232; that span reads GRS.

Belongs to the tetrahydrofolate dehydrogenase/cyclohydrolase family. Homodimer.

It carries out the reaction (6R)-5,10-methylene-5,6,7,8-tetrahydrofolate + NADP(+) = (6R)-5,10-methenyltetrahydrofolate + NADPH. The enzyme catalyses (6R)-5,10-methenyltetrahydrofolate + H2O = (6R)-10-formyltetrahydrofolate + H(+). It functions in the pathway one-carbon metabolism; tetrahydrofolate interconversion. Catalyzes the oxidation of 5,10-methylenetetrahydrofolate to 5,10-methenyltetrahydrofolate and then the hydrolysis of 5,10-methenyltetrahydrofolate to 10-formyltetrahydrofolate. This is Bifunctional protein FolD from Borreliella afzelii (strain PKo) (Borrelia afzelii).